A 209-amino-acid chain; its full sequence is PRA1 family protein A1 (209 aa).

The next 4 membrane-spanning stretches (helical) occupy residues 51–73, 77–99, 144–164, and 166–186; these read LYYY…VLTR, IFAA…GSFS, VFVL…SGLL, and VSVA…LRTP.

Belongs to the PRA1 family.

It is found in the endoplasmic reticulum membrane. Functionally, may be involved in both secretory and endocytic intracellular trafficking in the endosomal/prevacuolar compartments. This is PRA1 family protein A1 (PRA1A1) from Arabidopsis thaliana (Mouse-ear cress).